The chain runs to 449 residues: Sensor histidine protein kinase/phosphatase WalK (449 aa).

The Extracellular portion of the chain corresponds to 1 to 13; sequence MLDLLKQTIFTRD. Residues 14 to 34 form a helical membrane-spanning segment; the sequence is FIFILILLGFILVVTLLLLEN. The region spanning 35 to 87 is the HAMP domain; the sequence is RRDNIQLKQINQKVKDLIAGDYSKVLDMQGGSEITNITNNLNDLSEVIRLTQE. Topologically, residues 35 to 449 are cytoplasmic; sequence RRDNIQLKQI…EEVWEDEVED (415 aa). Positions 92–158 constitute a PAS domain; sequence ESKRLNSILF…YELRDLITQS (67 aa). The PAC domain occupies 157–211; that stretch reads QSPELLLDSQDINGEYLNLRVRFALIRRESGFISGLVAVLHDTTEQEKEERERRL. A Histidine kinase domain is found at 215-435; sequence NVSHELRTPL…TFTIVLPYDK (221 aa). The residue at position 218 (histidine 218) is a Phosphohistidine.

As to quaternary structure, may form homodimers. May interact with serine/threonine-protein kinase StkP; the interaction may play a role in regulating Walk signal transduction. Autophosphorylated.

It localises to the membrane. The catalysed reaction is ATP + protein L-histidine = ADP + protein N-phospho-L-histidine.. In terms of biological role, member of the two-component regulatory system WalK/WalR that regulates genes involved in cell wall metabolism. Functions as a sensor protein kinase which is autophosphorylated at a histidine residue and transfers its phosphate group to WalR. In turn, WalR binds to the upstream promoter regions of target genes to positively and negatively regulate their expression. Required to maintain expression of WalRK regulon genes in exponentially growing cells, including peptidoglycan hydrolase pcsB. Phosphorylates WalR and also capable of dephosphorylation of WalR. WalK phosphatase activity is probably involved in preventing cross-talk from PnpS and other non-cognate sensor kinases during exponential growth. May be considered a potential virulence factor. The sequence is that of Sensor histidine protein kinase/phosphatase WalK from Streptococcus pneumoniae serotype 2 (strain D39 / NCTC 7466).